The primary structure comprises 659 residues: MFKPEEIVKVEIITLARFRDTLLTYLHEMGVAQLDEVPIEGIQRDTPNEFYRKATSYSITLSRLIDTVKHYLPPRKGGIKEFIFPEEKKKRKYKYRGIEELIKDVEKFLGEAEPKIREVESEVSRLNNEISALKDSLNALELLSSLNIEIENLRGRSFLSVEVGLVDREKVENLIKELEEIAEGRVFTLRKDLAAKSLLVVVSLRKDSGKVISLLAKYGFEKIEIPEGEGLPKDLIPKYIERIKGKEKELEDVKLKGREIAEKYYEDLVFYKELMDNEREKSNFLSYLVRTEMTFGLLAWVPKKDVEKVVEGVKRITNGIAYIEVREPSEEEIENVPVKLKNPEFISHFEMLTEMYGVPKYNEIDPTPILAFTYSFFFGFMLTDFVYGLLLGVISALLVKGHSKLKDGTWKFAKIMLWASAFTMVLGILFGSYCGNLLDMAGVKVPRLLDTMSEALTVLVMALAIGLGHLFTGYILGFIVNWKNGDKRAAILEQLPWVFIIIGITLFALSSKLGIPQIAFKAVFGVGLALFVVGEIVNNKGMAVLLTISDFFGFIGNWLSYARLMALALATSGIALVINIIANMVWGLKIGPIPLGILIGIVILIGGHIFSTAINALGAFVHALRLHYVEFFGTFYSGEGRKFEPFAAKREVSELEIES.

The next 8 helical transmembrane spans lie at 376–396 (FFFG…VISA), 415–435 (IMLW…SYCG), 460–480 (VMAL…GFIV), 489–509 (AAIL…LFAL), 513–533 (LGIP…LFVV), 542–562 (MAVL…LSYA), 566–586 (ALAL…NMVW), and 590–610 (IGPI…GHIF).

Belongs to the V-ATPase 116 kDa subunit family. As to quaternary structure, has multiple subunits with at least A(3), B(3), C, D, E, F, H, I and proteolipid K(x).

It is found in the cell membrane. In terms of biological role, component of the A-type ATP synthase that produces ATP from ADP in the presence of a proton gradient across the membrane. This is A-type ATP synthase subunit I from Pyrococcus abyssi (strain GE5 / Orsay).